Here is a 373-residue protein sequence, read N- to C-terminus: Putative F-box protein At1g76830 (373 aa).

The region spanning 4-49 is the F-box domain; it reads ITSFENLPEELKREILLRMSPNSLVTCSRVSKKLASMIRTKSFKEL.

The protein is Putative F-box protein At1g76830 of Arabidopsis thaliana (Mouse-ear cress).